The following is a 117-amino-acid chain: Large ribosomal subunit protein bL20 (117 aa).

This sequence belongs to the bacterial ribosomal protein bL20 family.

Functionally, binds directly to 23S ribosomal RNA and is necessary for the in vitro assembly process of the 50S ribosomal subunit. It is not involved in the protein synthesizing functions of that subunit. The polypeptide is Large ribosomal subunit protein bL20 (Rickettsia rickettsii (strain Iowa)).